The following is a 448-amino-acid chain: Trigger factor (448 aa).

Residues Gly-172 to Pro-257 enclose the PPIase FKBP-type domain.

The protein belongs to the FKBP-type PPIase family. Tig subfamily.

It is found in the cytoplasm. It carries out the reaction [protein]-peptidylproline (omega=180) = [protein]-peptidylproline (omega=0). Its function is as follows. Involved in protein export. Acts as a chaperone by maintaining the newly synthesized protein in an open conformation. Functions as a peptidyl-prolyl cis-trans isomerase. The sequence is that of Trigger factor from Paraburkholderia xenovorans (strain LB400).